We begin with the raw amino-acid sequence, 156 residues long: MLLPDWKIRKEILIEPFSEESLQPAGYDLRVGREAFVKGKLIDVEKEGKVVIPPREYALILTLERIKLPDDVMGDMKIRSSLAREGVIGSFAWVDPGWDGNLTLMLYNASNEPVELRYGERFVQIAFIRLEGPARNPYRGNYQGSTRLAFSKRKKL.

DCTP is bound by residues 79 to 84, aspartate 95, glutamine 124, and tyrosine 138; that span reads RSSLAR.

The protein belongs to the dCTP deaminase family. Homotrimer.

The catalysed reaction is dCTP + H2O + H(+) = dUTP + NH4(+). It functions in the pathway pyrimidine metabolism; dUMP biosynthesis; dUMP from dCTP (dUTP route): step 1/2. Functionally, catalyzes the deamination of dCTP to dUTP. This is dCTP deaminase from Pyrococcus furiosus (strain ATCC 43587 / DSM 3638 / JCM 8422 / Vc1).